Consider the following 243-residue polypeptide: Transmembrane protein 174 (243 aa).

The next 2 helical transmembrane spans lie at 40–60 and 73–93; these read LLFS…MGWI and LLGP…VCKF. Residues 205-229 are disordered; the sequence is AGHDRPSSDADQLEGTQMGEEERVC.

In terms of assembly, interacts with SLC34A1; regulates SLC34A1 internalization by PTH and FGF23.

The protein localises to the endoplasmic reticulum membrane. It is found in the apical cell membrane. Its function is as follows. Regulator of plasma phosphate homeostasis. Decreases serum inorganic phosphate (Pi) uptake by regulating the sodium-phosphate cotransporter SLC34A1 trafficking by PTH and FGF23 in the kidney. The chain is Transmembrane protein 174 (Tmem174) from Rattus norvegicus (Rat).